Here is a 358-residue protein sequence, read N- to C-terminus: WD repeat domain phosphoinositide-interacting protein 4 (358 aa).

2 WD repeats span residues 2 to 40 (AQQR…EKGH) and 188 to 228 (AHQS…KLVE). The L/FRRG motif signature appears at 229-232 (LRRG). Residues 233–272 (TDPATLYCINFSHDSSFLCASSDKGTVHIFALKDTKLNRR) form a WD 3 repeat.

This sequence belongs to the WD repeat PROPPIN family.

The protein resides in the preautophagosomal structure. Its function is as follows. Component of the autophagy machinery that controls the major intracellular degradation process by which cytoplasmic materials are packaged into autophagosomes and delivered to lysosomes for degradation. Binds phosphatidylinositol 3-phosphate (PtdIns3P). This Danio rerio (Zebrafish) protein is WD repeat domain phosphoinositide-interacting protein 4 (wdr45).